The following is a 580-amino-acid chain: Putative multidrug export ATP-binding/permease protein YgaD (580 aa).

Residues 1 to 17 (MGVMKRYMQFVKPYKKQ) are Cytoplasmic-facing. Residues 18–38 (IFVTVLIGIVKFSIPLALPLL) traverse the membrane as a helical segment. Residues 19–307 (FVTVLIGIVK…LINSSTTLTQ (289 aa)) enclose the ABC transmembrane type-1 domain. The Extracellular segment spans residues 39 to 57 (LKYVVDDIIQGGGTASDKT). The helical transmembrane segment at 58 to 78 (TSLFTIMAIMFALFLILRPPV) threads the bilayer. Residues 79 to 135 (EYYRQYFAQWTASKVLYDIRAKLFDHIQKLSLRFYANTRTGEVISRVINDVEQTKDF) lie on the Cytoplasmic side of the membrane. A helical transmembrane segment spans residues 136-156 (VITGLMNIWLDMLTILIVISI). Over 157-163 (MLTLDVK) the chain is Extracellular. A helical transmembrane segment spans residues 164–184 (LTLISIVLFPLYGISVKYFYG). Over 185-243 (RLRKLTRERSQALAQVQGHLHERIQGMPVIRSFAIEDHEQAQFNEKNGHFLDKAIRHTN) the chain is Cytoplasmic. A helical membrane pass occupies residues 244–263 (WNAKTFAVVNTITDLAPLIV). At 264–268 (IACAG) the chain is on the extracellular side. The chain crosses the membrane as a helical span at residues 269-288 (YFVINGPLTVGTMVAFVGYI). Residues 289–580 (DRMYNPVRRL…KHLFTIQNLN (292 aa)) lie on the Cytoplasmic side of the membrane. In terms of domain architecture, ABC transporter spans 341–576 (VEFQNVSFQY…ESQYKHLFTI (236 aa)). 375-382 (GMSGGGKS) serves as a coordination point for ATP.

The protein belongs to the ABC transporter superfamily. In terms of assembly, homodimer.

The protein localises to the cell membrane. Its function is as follows. May be involved in multidrug export. Transmembrane domains (TMD) form a pore in the cell membrane and the ATP-binding domain (NBD) is responsible for energy generation. This is Putative multidrug export ATP-binding/permease protein YgaD (ygaD) from Bacillus subtilis (strain 168).